The following is a 953-amino-acid chain: Protein translocase subunit SecA (953 aa).

ATP contacts are provided by residues glutamine 84, 102–106 (GEGKT), and aspartate 491. The tract at residues 832–953 (EPEPAPEQPS…RAEAKKNKRR (122 aa)) is disordered. The span at 841–865 (SVPVSVSRSAEPTPDLQAAAEAAAA) shows a compositional bias: low complexity. The segment covering 898–907 (KGLDAPEKQR) has biased composition (basic and acidic residues). Residues 908-934 (LNYSGPTEQGGVQTTSESAGEQGNGTS) are compositionally biased toward polar residues. Residues 940-953 (RAAARAEAKKNKRR) are compositionally biased toward basic and acidic residues.

The protein belongs to the SecA family. In terms of assembly, monomer and homodimer. Part of the essential Sec protein translocation apparatus which comprises SecA, SecYEG and auxiliary proteins SecDF. Other proteins may also be involved.

It localises to the cell membrane. The protein localises to the cytoplasm. The enzyme catalyses ATP + H2O + cellular proteinSide 1 = ADP + phosphate + cellular proteinSide 2.. Part of the Sec protein translocase complex. Interacts with the SecYEG preprotein conducting channel. Has a central role in coupling the hydrolysis of ATP to the transfer of proteins into and across the cell membrane, serving as an ATP-driven molecular motor driving the stepwise translocation of polypeptide chains across the membrane. The sequence is that of Protein translocase subunit SecA from Saccharopolyspora erythraea (strain ATCC 11635 / DSM 40517 / JCM 4748 / NBRC 13426 / NCIMB 8594 / NRRL 2338).